A 183-amino-acid polypeptide reads, in one-letter code: uncharacterized protein (183 aa).

This sequence belongs to the Bcl-2 family.

This is an uncharacterized protein from Equine herpesvirus 2 (strain 86/87) (EHV-2).